The following is a 185-amino-acid chain: Sulfopyruvate decarboxylase subunit beta (185 aa).

It belongs to the TPP enzyme family. Heterododecamer composed of 6 subunits alpha and 6 subunits beta. It depends on thiamine diphosphate as a cofactor.

The catalysed reaction is 3-sulfopyruvate + H(+) = sulfoacetaldehyde + CO2. It functions in the pathway cofactor biosynthesis; coenzyme M biosynthesis; sulfoacetaldehyde from phosphoenolpyruvate and sulfite: step 4/4. Its function is as follows. Involved in the biosynthesis of the coenzyme M (2-mercaptoethanesulfonic acid). Catalyzes the decarboxylation of sulfopyruvate to sulfoacetaldehyde. The chain is Sulfopyruvate decarboxylase subunit beta from Methanococcus maripaludis (strain DSM 14266 / JCM 13030 / NBRC 101832 / S2 / LL).